The chain runs to 527 residues: tRNA-2-methylthio-N(6)-dimethylallyladenosine synthase (527 aa).

Residues 1 to 27 (MMNEKQRLQYTAQIETDHPTDKKSALD) form a disordered region. Over residues 15–27 (ETDHPTDKKSALD) the composition is skewed to basic and acidic residues. The region spanning 84–202 (RKFYIRTYGC…LPYILKEAYM (119 aa)) is the MTTase N-terminal domain. [4Fe-4S] cluster contacts are provided by Cys-93, Cys-129, Cys-163, Cys-239, Cys-243, and Cys-246. In terms of domain architecture, Radical SAM core spans 225 to 455 (RKGNIKAWVN…NALVNEISAK (231 aa)). The region spanning 458–521 (KEYEGQVVEV…TWTLNGEMVE (64 aa)) is the TRAM domain.

Belongs to the methylthiotransferase family. MiaB subfamily. Monomer. [4Fe-4S] cluster serves as cofactor.

The protein resides in the cytoplasm. The enzyme catalyses N(6)-dimethylallyladenosine(37) in tRNA + (sulfur carrier)-SH + AH2 + 2 S-adenosyl-L-methionine = 2-methylsulfanyl-N(6)-dimethylallyladenosine(37) in tRNA + (sulfur carrier)-H + 5'-deoxyadenosine + L-methionine + A + S-adenosyl-L-homocysteine + 2 H(+). Catalyzes the methylthiolation of N6-(dimethylallyl)adenosine (i(6)A), leading to the formation of 2-methylthio-N6-(dimethylallyl)adenosine (ms(2)i(6)A) at position 37 in tRNAs that read codons beginning with uridine. This chain is tRNA-2-methylthio-N(6)-dimethylallyladenosine synthase, found in Anoxybacillus flavithermus (strain DSM 21510 / WK1).